A 186-amino-acid polypeptide reads, in one-letter code: Mitoferrin-2B (186 aa).

The Solcar repeat unit spans residues 75-163; that stretch reads SNVTAHMLAG…FACYEKLKKT (89 aa). A run of 3 helical transmembrane segments spans residues 77-96, 137-157, and 172-185; these read VTAH…CLMY, RGLN…FACY, and GNCH…NSCP.

It belongs to the mitochondrial carrier (TC 2.A.29) family.

It is found in the mitochondrion inner membrane. It carries out the reaction Fe(2+)(in) = Fe(2+)(out). Mitochondrial iron transporter that mediates iron uptake. Probably required for heme synthesis of hemoproteins and Fe-S cluster assembly in non-erythroid cells. This chain is Mitoferrin-2B (slc25a28-b), found in Xenopus laevis (African clawed frog).